A 204-amino-acid chain; its full sequence is Ribosome maturation factor RimP (204 aa).

The tract at residues 176–204 (GNFDESQFDEIEESEGEEADEAEQPPTKH) is disordered. The segment covering 181-198 (SQFDEIEESEGEEADEAE) has biased composition (acidic residues).

It belongs to the RimP family.

It is found in the cytoplasm. Its function is as follows. Required for maturation of 30S ribosomal subunits. This Cereibacter sphaeroides (strain KD131 / KCTC 12085) (Rhodobacter sphaeroides) protein is Ribosome maturation factor RimP.